A 367-amino-acid polypeptide reads, in one-letter code: Epoxide hydrolase 3 (367 aa).

Residues 22–42 (ALVMSLVYLAALVAAFVYSCI) traverse the membrane as a helical segment. The active-site Nucleophile is the aspartate 180. The active-site Proton donor is tyrosine 288. Histidine 344 (proton acceptor) is an active-site residue.

The protein belongs to the AB hydrolase superfamily. Epoxide hydrolase family. In terms of tissue distribution, predominantly expressed in skin, esophagus, lung and tongue and to a lesser extent in pancreas and eye.

The protein resides in the microsome membrane. The catalysed reaction is an epoxide + H2O = an ethanediol. The enzyme catalyses 9,10-epoxyoctadecanoate + H2O = 9,10-dihydroxyoctadecanoate. It carries out the reaction 9,10-epoxy-(12Z)-octadecenoate + H2O = 9,10-dihydroxy-(12Z)-octadecenoate. It catalyses the reaction 8,9-epoxy-(5Z,11Z,14Z)-eicosatrienoate + H2O = 8,9-dihydroxy-(5Z,11Z,14Z)-eicosatrienoate. The catalysed reaction is 11,12-epoxy-(5Z,8Z,14Z)-eicosatrienoate + H2O = 11,12-dihydroxy-(5Z,8Z,14Z)-eicosatrienoate. The enzyme catalyses 14,15-epoxy-(5Z,8Z,11Z)-eicosatrienoate + H2O = 14,15-dihydroxy-(5Z,8Z,11Z)-eicosatrienoate. Inhibited by 1-(1-acetylpiperidin-4-yl)-3-(4-(trifl uoromethoxy)phenyl)urea (TPAU), 1-cyclohexyl-3-dodecylurea (CDU), 12-(3-adamantan-1-yl-ureido)-dodecanoic acid (AUDA), 1-((3S, 5S, 7S)-adamantan-1-yl)-3-(5-(2-(2-ethoxyethoxy) ethoxy)pentyl)urea (AEPU) and to a lesser extent by 8-(3-((3S, 5S, 7S)-adamantan-1-yl)ureido) octanoic acid (AUOA). Catalyzes the hydrolysis of epoxide-containing fatty acids. Active in vitro against epoxyeicosatrienoic acids (EETs) including 8,9-EET, 9,10-EET, 11,12-EET and 14,15-EET and leukotoxin. The chain is Epoxide hydrolase 3 (Ephx3) from Mus musculus (Mouse).